A 248-amino-acid polypeptide reads, in one-letter code: MDQPAVATASTSIREDLVGGESFITASKPAQKTSSFEREGWWRIALTDTPIPGTYHLKTFIEESLLNPVIATYNFKNEGRKKPPLVQRNNPVLNDLPQYMPPDFLDLLKKQVATYSFKDKPRPSPSTLVDKDQSLQLSPGQYNVLPAPVPKYASRSCVFRSTVQRFPTTYFIPHEGPGPGHYNVKMPPTSSVTSCFQSRVPRFLPSCSKTPGPGAYTTLRQFPKQSPTIAKMGQEHSLFFNNNNWLLK.

As to quaternary structure, interacts with histone H3. Interacts with histone H4.

Its subcellular location is the cytoplasm. The protein localises to the nucleus. Its function is as follows. Maternal factor that plays a role in epigenetic chromatin reprogramming during early development of the zygote. Involved in the regulation of gametic DNA demethylation by inducing the conversion of the modified genomic base 5-methylcytosine (5mC) into 5-hydroxymethylcytosine (5hmC). This is Protein STPG4 from Homo sapiens (Human).